A 79-amino-acid polypeptide reads, in one-letter code: Sec-independent protein translocase protein TatA (79 aa).

Residues 1–21 (MGGFTSIWHWVIVLLVIVLLF) form a helical membrane-spanning segment. Residues 46–79 (DDEEEAKNEPKTLDAQATQTKVHETSEIKSKQES) are disordered. A compositionally biased stretch (basic and acidic residues) spans 66–79 (KVHETSEIKSKQES).

Belongs to the TatA/E family. As to quaternary structure, the Tat system comprises two distinct complexes: a TatABC complex, containing multiple copies of TatA, TatB and TatC subunits, and a separate TatA complex, containing only TatA subunits. Substrates initially bind to the TatABC complex, which probably triggers association of the separate TatA complex to form the active translocon.

The protein resides in the cell inner membrane. Its function is as follows. Part of the twin-arginine translocation (Tat) system that transports large folded proteins containing a characteristic twin-arginine motif in their signal peptide across membranes. TatA could form the protein-conducting channel of the Tat system. This Helicobacter pylori (strain HPAG1) protein is Sec-independent protein translocase protein TatA.